The primary structure comprises 1013 residues: EF-hand calcium-binding domain-containing protein 6 (1013 aa).

5 EF-hand domains span residues 20 to 55 (KNIKTVMKAFKLIDVNKTGLVRPQELRRVLETFCLK), 145 to 180 (KSYEKIEKALSAGDPCKGGYVSFNYLKIVLDTFIYQ), 251 to 286 (DRSASLKKALLIINTKPDGPITREEFRYILNCVAIK), 287 to 322 (LSDSEFKELMQILDPGDTGVVNTSMFIDLIEENCRM), and 352 to 387 (RNLQAFYNMLRSYDLGDTGLIGRNNFKKIMHVFCPF). The interval 441-460 (QKDEQQQPDLSERTKPTEDK) is disordered. EF-hand domains are found at residues 482 to 517 (QQDPAFKKRFLDFSKEPNGKINVHDFRKILEDTGMP), 589 to 624 (ESFRDPYSAFFKTDVDRDGIINMHDLHRLLLHLLLN), 695 to 730 (NRWSDLSKNFLETDNEGNGILRRRDIKNALYGFDIP), 731 to 766 (LTPREFEKLWARYNTEGKGHITYQEFLQKLGINYSP), 812 to 847 (DLHQDISKAFTKIDKSKTNYISICKMQKVLEECGCS), and 917 to 952 (SSQLALSTAFSALDKEDTGFVKATEFGQVLKDFCYK). Ca(2+) contacts are provided by Asp-602, Asp-604, Asp-606, and Asp-613. Thr-732 is subject to Phosphothreonine.

In terms of assembly, microtubule inner protein component of sperm flagellar doublet microtubules. Binds PARK7. Part of a ternary complex containing PARK7, EFCAB6/DJBP and AR.

Its subcellular location is the nucleus. The protein localises to the cytoplasm. It localises to the cytoskeleton. It is found in the flagellum axoneme. Its function is as follows. Negatively regulates the androgen receptor by recruiting histone deacetylase complex, and protein DJ-1 antagonizes this inhibition by abrogation of this complex. Microtubule inner protein (MIP) part of the dynein-decorated doublet microtubules (DMTs) in cilia axoneme, which is required for motile cilia beating. The chain is EF-hand calcium-binding domain-containing protein 6 (EFCAB6) from Pongo abelii (Sumatran orangutan).